The primary structure comprises 401 residues: Probable thioesterase FGSG_00047 (401 aa).

The tract at residues 379–401 (AREMDQRKRQKDFTHTTIHDKNS) is disordered.

The protein belongs to the AMT4 thioesterase family.

It functions in the pathway mycotoxin biosynthesis. In terms of biological role, probable thioesterase; part of the gene cluster that mediates the biosynthesis of gramillins A and B, bicyclic lipopeptides that induce cell death in maize leaves but not in wheat leaves. The nonribosomal peptide synthetase GRA1 incorporates respectively a glutamic adic (Glu), a leucine (Leu), a serine (Ser), a hydroxyglutamine (HOGln), a 2-amino decanoic acid, and 2 cysteins (CysB and CysA). The biosynthesis of 2-amino decanoic acid incorporated in gramillins could be initiated by a fatty acid synthase composed of the alpha and beta subunits FGSG_00036 and FGSG_11656. The cytochrome P450 monooxygenase FGSG_15680 could hydroxylate the fatty acid chain. Subsequent oxidation to the ketone by the oxidoreductase FGSG_00048 and transamination by aminotransferase FGSG_00049 could form 2-amino-decanoic acid. On the other hand, FGSG_15680 could also be responsible for the HO-modified glutamine at the gamma-position. Whether hydroxylation occurs on the fully assembled product or on the Gln residue prior to assembly into the gramillins requires further proof. The thioredoxin FGSG_00043 could also be required for the disulfide-bond formation between CysA and CysB. The specific involvement of the remaining proteins from the cluster is more difficult to discern, but could have broader regulatory (FGSG_00040 and FGSG_11657) or enzymatic functions (FGSG_00044 and FGSG_00045). The final C-domain of GRA1 does not possess the expected sequence of a termination CT domain, often implicated in macrocyclization and release of a cyclopeptidein fungal NRPs; and the thioesterase FGSG_00047 may act in concert with the terminal C-domain of GRA1 to catalyze the formation of the macrocyclic anhydride and release of the products. The chain is Probable thioesterase FGSG_00047 from Gibberella zeae (strain ATCC MYA-4620 / CBS 123657 / FGSC 9075 / NRRL 31084 / PH-1) (Wheat head blight fungus).